A 151-amino-acid polypeptide reads, in one-letter code: Probable chemoreceptor glutamine deamidase CheD (151 aa).

This sequence belongs to the CheD family.

The catalysed reaction is L-glutaminyl-[protein] + H2O = L-glutamyl-[protein] + NH4(+). In terms of biological role, probably deamidates glutamine residues to glutamate on methyl-accepting chemotaxis receptors (MCPs), playing an important role in chemotaxis. This chain is Probable chemoreceptor glutamine deamidase CheD, found in Methanosarcina barkeri (strain Fusaro / DSM 804).